The chain runs to 490 residues: AP-5 complex subunit mu-1 (490 aa).

Residues 206–476 (KPQVSISITE…LISSDYYIWN (271 aa)) form the MHD domain.

This sequence belongs to the adaptor complexes medium subunit family. As to quaternary structure, probably part of the adaptor protein complex 5 (AP-5) a tetramer composed of AP5B1, AP5M1, AP5S1 and AP5Z1.

It is found in the cytoplasm. It localises to the cytosol. Its subcellular location is the late endosome membrane. The protein localises to the lysosome membrane. Its function is as follows. As part of AP-5, a probable fifth adaptor protein complex it may be involved in endosomal transport. The protein is AP-5 complex subunit mu-1 (AP5M1) of Bos taurus (Bovine).